Consider the following 227-residue polypeptide: Ribosomal RNA large subunit methyltransferase E (227 aa).

Residues glycine 78, tryptophan 80, aspartate 103, aspartate 119, and aspartate 143 each contribute to the S-adenosyl-L-methionine site. Catalysis depends on lysine 183, which acts as the Proton acceptor.

This sequence belongs to the class I-like SAM-binding methyltransferase superfamily. RNA methyltransferase RlmE family.

It is found in the cytoplasm. The enzyme catalyses uridine(2552) in 23S rRNA + S-adenosyl-L-methionine = 2'-O-methyluridine(2552) in 23S rRNA + S-adenosyl-L-homocysteine + H(+). In terms of biological role, specifically methylates the uridine in position 2552 of 23S rRNA at the 2'-O position of the ribose in the fully assembled 50S ribosomal subunit. The chain is Ribosomal RNA large subunit methyltransferase E from Rickettsia typhi (strain ATCC VR-144 / Wilmington).